Consider the following 145-residue polypeptide: 3-dehydroquinate dehydratase (145 aa).

Catalysis depends on Tyr-24, which acts as the Proton acceptor. Residues Asn-75, His-81, and Asp-88 each coordinate substrate. Residue His-102 is the Proton donor of the active site. Substrate-binding positions include 103–104 (LS) and Arg-113.

Belongs to the type-II 3-dehydroquinase family. In terms of assembly, homododecamer.

The catalysed reaction is 3-dehydroquinate = 3-dehydroshikimate + H2O. It participates in metabolic intermediate biosynthesis; chorismate biosynthesis; chorismate from D-erythrose 4-phosphate and phosphoenolpyruvate: step 3/7. Functionally, catalyzes a trans-dehydration via an enolate intermediate. The chain is 3-dehydroquinate dehydratase from Chelativorans sp. (strain BNC1).